Consider the following 265-residue polypeptide: MVRKNQEWPDEGELIIGTVYKVLNYGAFAKLEEYHGKEAFIHISEVSSGWVKNIRDHVRENQKIVCRVLRVNPKKGHVDASLKRIREDQRTKKIQHWKIEQKAEKFLELSAKSLGKSLNDAYDEVGYELMDIFGDVYGAFETAADDGAKSLTDEGISQEWADAITEIANKNITPPEVHISGYVDIETFVPDGVDVIIEALKAAEDNGDEEEEIKVQCVGAPRYRITVKSTDYILAEKALKAAADRCIEIVEASEGNGSFLRELDS.

The region spanning 12 to 83 is the S1 motif domain; it reads GELIIGTVYK…KKGHVDASLK (72 aa).

Belongs to the eIF-2-alpha family. As to quaternary structure, heterotrimer composed of an alpha, a beta and a gamma chain.

Its function is as follows. eIF-2 functions in the early steps of protein synthesis by forming a ternary complex with GTP and initiator tRNA. The chain is Translation initiation factor 2 subunit alpha from Methanobrevibacter smithii (strain ATCC 35061 / DSM 861 / OCM 144 / PS).